We begin with the raw amino-acid sequence, 602 residues long: 4-hydroxy-3-methylbut-2-en-1-yl diphosphate synthase (flavodoxin) (602 aa).

Positions 508, 511, 543, and 550 each coordinate [4Fe-4S] cluster.

It belongs to the IspG family. It depends on [4Fe-4S] cluster as a cofactor.

It catalyses the reaction (2E)-4-hydroxy-3-methylbut-2-enyl diphosphate + oxidized [flavodoxin] + H2O + 2 H(+) = 2-C-methyl-D-erythritol 2,4-cyclic diphosphate + reduced [flavodoxin]. It participates in isoprenoid biosynthesis; isopentenyl diphosphate biosynthesis via DXP pathway; isopentenyl diphosphate from 1-deoxy-D-xylulose 5-phosphate: step 5/6. Converts 2C-methyl-D-erythritol 2,4-cyclodiphosphate (ME-2,4cPP) into 1-hydroxy-2-methyl-2-(E)-butenyl 4-diphosphate. The chain is 4-hydroxy-3-methylbut-2-en-1-yl diphosphate synthase (flavodoxin) from Chlamydia trachomatis serovar L2b (strain UCH-1/proctitis).